A 199-amino-acid chain; its full sequence is MYEGIVQDLIDELGRLPGIGPKSAQRIAFHLLAADPVDVRRLATALTEVKDKVRFCRSCFNVAQSELCRICADPRRDQALICVVEEPKDVVAIERTREFRGRYHVLGGAINPIGGVGPDDLHIRELVARLADGTVTELILATDPNTEGEVTASYLARQIGPMGLRVTRLASGLPMGGDLEWADEVTLGRAFEGRRVVNA.

The C4-type zinc finger occupies 56–71 (CRSCFNVAQSELCRIC). A Toprim domain is found at 79-174 (ALICVVEEPK…RVTRLASGLP (96 aa)).

The protein belongs to the RecR family.

May play a role in DNA repair. It seems to be involved in an RecBC-independent recombinational process of DNA repair. It may act with RecF and RecO. The polypeptide is Recombination protein RecR (Frankia alni (strain DSM 45986 / CECT 9034 / ACN14a)).